We begin with the raw amino-acid sequence, 333 residues long: Holliday junction branch migration complex subunit RuvB (333 aa).

A large ATPase domain (RuvB-L) region spans residues 1 to 182 (MDERLLSGES…FGVLSRLEYY (182 aa)). ATP-binding positions include L21, R22, G63, K66, T67, T68, 129 to 131 (EDF), R172, Y182, and R219. T67 is a binding site for Mg(2+). Positions 183–253 (TVDQLSAIVE…ITQMALELLQ (71 aa)) are small ATPAse domain (RuvB-S). A head domain (RuvB-H) region spans residues 256–333 (KLGLDHIDHK…EHFGMEMPKV (78 aa)). R311 and R316 together coordinate DNA.

The protein belongs to the RuvB family. As to quaternary structure, homohexamer. Forms an RuvA(8)-RuvB(12)-Holliday junction (HJ) complex. HJ DNA is sandwiched between 2 RuvA tetramers; dsDNA enters through RuvA and exits via RuvB. An RuvB hexamer assembles on each DNA strand where it exits the tetramer. Each RuvB hexamer is contacted by two RuvA subunits (via domain III) on 2 adjacent RuvB subunits; this complex drives branch migration. In the full resolvosome a probable DNA-RuvA(4)-RuvB(12)-RuvC(2) complex forms which resolves the HJ.

The protein resides in the cytoplasm. The enzyme catalyses ATP + H2O = ADP + phosphate + H(+). Functionally, the RuvA-RuvB-RuvC complex processes Holliday junction (HJ) DNA during genetic recombination and DNA repair, while the RuvA-RuvB complex plays an important role in the rescue of blocked DNA replication forks via replication fork reversal (RFR). RuvA specifically binds to HJ cruciform DNA, conferring on it an open structure. The RuvB hexamer acts as an ATP-dependent pump, pulling dsDNA into and through the RuvAB complex. RuvB forms 2 homohexamers on either side of HJ DNA bound by 1 or 2 RuvA tetramers; 4 subunits per hexamer contact DNA at a time. Coordinated motions by a converter formed by DNA-disengaged RuvB subunits stimulates ATP hydrolysis and nucleotide exchange. Immobilization of the converter enables RuvB to convert the ATP-contained energy into a lever motion, pulling 2 nucleotides of DNA out of the RuvA tetramer per ATP hydrolyzed, thus driving DNA branch migration. The RuvB motors rotate together with the DNA substrate, which together with the progressing nucleotide cycle form the mechanistic basis for DNA recombination by continuous HJ branch migration. Branch migration allows RuvC to scan DNA until it finds its consensus sequence, where it cleaves and resolves cruciform DNA. The sequence is that of Holliday junction branch migration complex subunit RuvB from Bacillus cereus (strain Q1).